The following is a 436-amino-acid chain: MQILVDHSQKLRRSVTMKIASHIIEETISKKLLELAKTVVIDGFRKGKAPIHIVAKRYHNYLCQDVLYQLMHQQFIAAMLKEKINVISTPNYTYSTYQKDKDLIYQVEFEISPQVELKGIDTITVEKPLVQIKETDIDAMLTQLIKQNGSWEKTNNAAKITDRVTIDLYGTIENKRLKGSQAKNLNFTIGINNKHIIPGLENGIIGHKAGDNFNINIYLPDEYFPLELRGKLAIFTVALKKVEQYRLPHLDESFIKLLGVVDGTVEGLRNKIRKDIEVLLKNAVRNYIKEQVINYLLSVNNIDVPDIMIEQEIQIIKQKNTKHIGRIRKSALEQSRELIEAQAKRRIQITLLLIEIIKQHDIKVNTARMRAIMEEMAYLSPQKQEIINSYNSQSSMRRQISNIVLEEQAIEALLMKANVIEKKIDFADFMSKLSHS.

Positions Thr-161–Pro-248 constitute a PPIase FKBP-type domain.

It belongs to the FKBP-type PPIase family. Tig subfamily.

The protein resides in the cytoplasm. The catalysed reaction is [protein]-peptidylproline (omega=180) = [protein]-peptidylproline (omega=0). Involved in protein export. Acts as a chaperone by maintaining the newly synthesized protein in an open conformation. Functions as a peptidyl-prolyl cis-trans isomerase. In Baumannia cicadellinicola subsp. Homalodisca coagulata, this protein is Trigger factor.